Here is a 458-residue protein sequence, read N- to C-terminus: Phosphoglucosamine mutase (458 aa).

Residue S106 is the Phosphoserine intermediate of the active site. Mg(2+) is bound by residues S106, D247, D249, and D251. Residue S106 is modified to Phosphoserine.

The protein belongs to the phosphohexose mutase family. The cofactor is Mg(2+). Post-translationally, activated by phosphorylation.

It catalyses the reaction alpha-D-glucosamine 1-phosphate = D-glucosamine 6-phosphate. Functionally, catalyzes the conversion of glucosamine-6-phosphate to glucosamine-1-phosphate. This chain is Phosphoglucosamine mutase, found in Chlamydia trachomatis serovar A (strain ATCC VR-571B / DSM 19440 / HAR-13).